A 32-amino-acid chain; its full sequence is Apolipophorin-3 (32 aa).

The tract at residues Asp1 to Lys32 is disordered. Residues Lys20–Lys32 show a composition bias toward polar residues.

The protein belongs to the insect apolipophorin-3 family. Equilibrium between a soluble monomer and a bound lipoprotein form. Apolipophorin-3 associates with lipophorin during lipid loading until each particle contains 9 or 14 molecules of apolipophorin-3. In terms of tissue distribution, hemolymph.

It is found in the secreted. In terms of biological role, assists in the loading of diacylglycerol, generated from triacylglycerol stores in the fat body through the action of adipokinetic hormone, into lipophorin, the hemolymph lipoprotein. It increases the lipid carrying capacity of lipophorin by covering the expanding hydrophobic surface resulting from diacylglycerol uptake. It thus plays a critical role in the transport of lipids during flight in several species of insects. The protein is Apolipophorin-3 of Diatraea grandiosella (Southwestern corn borer).